The primary structure comprises 106 residues: NADH-quinone oxidoreductase subunit K (106 aa).

3 consecutive transmembrane segments (helical) span residues 8–28 (IGIENYIFLSVVLFCIGVFGV), 35–55 (IIVFMSIEIMLNAVNLLFVAF), and 66–86 (VFVFFSMAVAAAEVAVGLAIL).

The protein belongs to the complex I subunit 4L family. NDH-1 is composed of 14 different subunits. Subunits NuoA, H, J, K, L, M, N constitute the membrane sector of the complex.

Its subcellular location is the cell inner membrane. It catalyses the reaction a quinone + NADH + 5 H(+)(in) = a quinol + NAD(+) + 4 H(+)(out). In terms of biological role, NDH-1 shuttles electrons from NADH, via FMN and iron-sulfur (Fe-S) centers, to quinones in the respiratory chain. The immediate electron acceptor for the enzyme in this species is believed to be a menaquinone. Couples the redox reaction to proton translocation (for every two electrons transferred, four hydrogen ions are translocated across the cytoplasmic membrane), and thus conserves the redox energy in a proton gradient. The chain is NADH-quinone oxidoreductase subunit K from Flavobacterium johnsoniae (strain ATCC 17061 / DSM 2064 / JCM 8514 / BCRC 14874 / CCUG 350202 / NBRC 14942 / NCIMB 11054 / UW101) (Cytophaga johnsonae).